A 363-amino-acid chain; its full sequence is Adenosine 3'-phospho 5'-phosphosulfate transporter 2 (363 aa).

The next 10 membrane-spanning stretches (helical) occupy residues 39 to 59 (WLQF…YGYM), 63 to 83 (IFKL…QFVI), 106 to 126 (IYGV…ASVG), 131 to 151 (PTQV…GILI), 157 to 177 (GWID…FTLA), 187 to 206 (SRGY…IGNI), 231 to 251 (VFIF…PFFL), 257 to 277 (TFGY…VVLT), 281 to 301 (VFGA…TIIL), and 310 to 330 (FTIE…LNLY).

It belongs to the nucleotide-sugar transporter family. SLC35B subfamily.

The protein localises to the golgi apparatus membrane. Its function is as follows. Mediates the transport of adenosine 3'-phospho 5'-phosphosulfate (PAPS), from cytosol into Golgi. PAPS is a universal sulfuryl donor for sulfation events that take place in the Golgi. The protein is Adenosine 3'-phospho 5'-phosphosulfate transporter 2 (pst-2) of Caenorhabditis briggsae.